The chain runs to 254 residues: Pyridoxine 5'-phosphate synthase (254 aa).

3-amino-2-oxopropyl phosphate is bound at residue Asn-12. 1-deoxy-D-xylulose 5-phosphate is bound at residue 14–15 (DH). Arg-23 is a binding site for 3-amino-2-oxopropyl phosphate. The active-site Proton acceptor is His-48. Residues Arg-50 and His-55 each contribute to the 1-deoxy-D-xylulose 5-phosphate site. Glu-75 functions as the Proton acceptor in the catalytic mechanism. Residue Thr-105 coordinates 1-deoxy-D-xylulose 5-phosphate. The Proton donor role is filled by His-199. 3-amino-2-oxopropyl phosphate is bound by residues Gly-200 and 221-222 (GF).

Belongs to the PNP synthase family. In terms of assembly, homooctamer; tetramer of dimers.

It is found in the cytoplasm. It catalyses the reaction 3-amino-2-oxopropyl phosphate + 1-deoxy-D-xylulose 5-phosphate = pyridoxine 5'-phosphate + phosphate + 2 H2O + H(+). The protein operates within cofactor biosynthesis; pyridoxine 5'-phosphate biosynthesis; pyridoxine 5'-phosphate from D-erythrose 4-phosphate: step 5/5. In terms of biological role, catalyzes the complicated ring closure reaction between the two acyclic compounds 1-deoxy-D-xylulose-5-phosphate (DXP) and 3-amino-2-oxopropyl phosphate (1-amino-acetone-3-phosphate or AAP) to form pyridoxine 5'-phosphate (PNP) and inorganic phosphate. The polypeptide is Pyridoxine 5'-phosphate synthase (Rhodopseudomonas palustris (strain HaA2)).